We begin with the raw amino-acid sequence, 507 residues long: ATP synthase subunit alpha, chloroplastic (507 aa).

Residue 170 to 177 coordinates ATP; it reads GDRQTGKT.

This sequence belongs to the ATPase alpha/beta chains family. As to quaternary structure, F-type ATPases have 2 components, CF(1) - the catalytic core - and CF(0) - the membrane proton channel. CF(1) has five subunits: alpha(3), beta(3), gamma(1), delta(1), epsilon(1). CF(0) has four main subunits: a, b, b' and c.

It localises to the plastid. The protein resides in the chloroplast thylakoid membrane. It catalyses the reaction ATP + H2O + 4 H(+)(in) = ADP + phosphate + 5 H(+)(out). Functionally, produces ATP from ADP in the presence of a proton gradient across the membrane. The alpha chain is a regulatory subunit. In Gossypium barbadense (Sea Island cotton), this protein is ATP synthase subunit alpha, chloroplastic.